The sequence spans 216 residues: MKKPYRKISDYAIVGGLSALVMVSIVGCKSNADDKPKEQSSLSQSVQKGAFVILEEQKDKSYKVVEEYPSSRTHIIVRDLQGNERVLSNEEIQKLIKEEEAKIDNGTSKLVQPNNGGGSNEGSGFGLGSAILGSAAGAILGSYIGNKLFNNPNYQQNAQRTYKSPQAYQRSQNSFSKSAPSASSMGGASKGQSGFFGSSRPTSSPAVSSGTRGFNS.

Positions 1-27 (MKKPYRKISDYAIVGGLSALVMVSIVG) are cleaved as a signal peptide. Cys-28 carries the N-palmitoyl cysteine lipid modification. Residue Cys-28 is the site of S-diacylglycerol cysteine attachment. The segment covering 159-170 (QRTYKSPQAYQR) has biased composition (polar residues). Positions 159-216 (QRTYKSPQAYQRSQNSFSKSAPSASSMGGASKGQSGFFGSSRPTSSPAVSSGTRGFNS) are disordered. Residues 171-209 (SQNSFSKSAPSASSMGGASKGQSGFFGSSRPTSSPAVSS) show a composition bias toward low complexity.

This sequence belongs to the UPF0323 family.

It is found in the cell membrane. The protein is UPF0323 lipoprotein HPG27_212 of Helicobacter pylori (strain G27).